The primary structure comprises 635 residues: Probable ethylene response sensor 2 (635 aa).

The next 3 helical transmembrane spans lie at 24-44 (ISDF…IYFV), 59-79 (FGAF…TFAI), and 94-114 (ATAV…PDLL). Cu cation is bound by residues Cys-66 and His-70. The GAF domain maps to 159-308 (DRHTILRTTL…VVADQVAVAL (150 aa)). A Histidine kinase domain is found at 351–589 (VMNHEMRTPM…MFFVKLGMPE (239 aa)). Residue His-354 is modified to Phosphohistidine; by autocatalysis.

It belongs to the ethylene receptor family. Homodimer. Requires Cu cation as cofactor.

The protein resides in the endoplasmic reticulum membrane. It carries out the reaction ATP + protein L-histidine = ADP + protein N-phospho-L-histidine.. In terms of biological role, ethylene receptor related to bacterial two-component regulators. Acts as a negative regulator of ethylene signaling. May play a role in the regulation of flowering by up-regulating GI (GIGANTEA) and RCN1 and regulate starch accumulation by down-regulating the alpha-amylase AMY3D. The polypeptide is Probable ethylene response sensor 2 (ERS2) (Oryza sativa subsp. japonica (Rice)).